The following is a 101-amino-acid chain: MEALPSNLIFHELIGLYAEVFESTNPKLINICGRVIDETRNMLIIETEDTHEKMVPKNGTTFVFHLPSSSADHDQRVKIFGTLLLSQPENRVKNIRKIRMR.

It belongs to the eukaryotic/archaeal RNase P protein component 1 family. As to quaternary structure, consists of a catalytic RNA component and at least 4-5 protein subunits.

The protein localises to the cytoplasm. It carries out the reaction Endonucleolytic cleavage of RNA, removing 5'-extranucleotides from tRNA precursor.. Its function is as follows. Part of ribonuclease P, a protein complex that generates mature tRNA molecules by cleaving their 5'-ends. This is Ribonuclease P protein component 1 from Methanococcoides burtonii (strain DSM 6242 / NBRC 107633 / OCM 468 / ACE-M).